The primary structure comprises 199 residues: Ras-related protein Rab-7b (199 aa).

GTP contacts are provided by residues 15–22 (GAIGVGKT), 34–40 (YEEYQTT), 63–67 (DTGGQ), 124–127 (NKID), and 154–155 (AK). 2 short sequence motifs (switch) span residues 28 to 41 (YVHK…QTTL) and 67 to 82 (QERF…KGSD). Ser186 carries the post-translational modification Phosphoserine. S-geranylgeranyl cysteine attachment occurs at residues Cys198 and Cys199.

The protein belongs to the small GTPase superfamily. Rab family. In terms of tissue distribution, expressed in heart, placenta, lung, skeletal muscle and peripheral blood leukocyte.

The protein resides in the late endosome. It localises to the lysosome. It is found in the golgi apparatus. The protein localises to the trans-Golgi network. Its subcellular location is the cytoplasmic vesicle. The protein resides in the phagosome. It localises to the phagosome membrane. In terms of biological role, controls vesicular trafficking from endosomes to the trans-Golgi network (TGN). Acts as a negative regulator of TLR9 signaling and can suppress TLR9-triggered TNFA, IL6, and IFNB production in macrophages by promoting TLR9 lysosomal degradation. Also negatively regulates TLR4 signaling in macrophages by promoting lysosomal degradation of TLR4. Promotes megakaryocytic differentiation by increasing NF-kappa-B-dependent IL6 production and subsequently enhancing the association of STAT3 with GATA1. Not involved in the regulation of the EGF- and EGFR degradation pathway. The protein is Ras-related protein Rab-7b (RAB7B) of Homo sapiens (Human).